Consider the following 196-residue polypeptide: GTP cyclohydrolase 1 (196 aa).

The Zn(2+) site is built by Cys-86, His-89, and Cys-158.

Belongs to the GTP cyclohydrolase I family. In terms of assembly, homomer.

The catalysed reaction is GTP + H2O = 7,8-dihydroneopterin 3'-triphosphate + formate + H(+). It functions in the pathway cofactor biosynthesis; 7,8-dihydroneopterin triphosphate biosynthesis; 7,8-dihydroneopterin triphosphate from GTP: step 1/1. The sequence is that of GTP cyclohydrolase 1 from Clostridium botulinum (strain Kyoto / Type A2).